Reading from the N-terminus, the 251-residue chain is Flap endonuclease Xni (251 aa).

Position 104 (Asp-104) interacts with Mg(2+). The region spanning 160–249 (VQPQQLPDYW…IDGNLQQLRL (90 aa)) is the 5'-3' exonuclease domain. K(+) is bound by residues Leu-171, Ala-172, Pro-180, Val-182, and Ile-185. An interaction with DNA region spans residues 184 to 189 (GIGPKS).

This sequence belongs to the Xni family. Mg(2+) is required as a cofactor. It depends on K(+) as a cofactor.

Functionally, has flap endonuclease activity. During DNA replication, flap endonucleases cleave the 5'-overhanging flap structure that is generated by displacement synthesis when DNA polymerase encounters the 5'-end of a downstream Okazaki fragment. The polypeptide is Flap endonuclease Xni (Escherichia coli O45:K1 (strain S88 / ExPEC)).